Reading from the N-terminus, the 372-residue chain is Ketol-acid reductoisomerase (NADP(+)) (372 aa).

The disordered stretch occupies residues 1 to 25; the sequence is MTETKTQTETETDEEEGTDTDTALD. Residues 10–19 are compositionally biased toward acidic residues; it reads TETDEEEGTD. The KARI N-terminal Rossmann domain occupies 24–205; it reads LDTTIYYDDD…GCTRAGAIET (182 aa). Residues 49–52, S75, S77, and 107–110 each bind NADP(+); these read YGSQ and DTVQ. Residue H131 is part of the active site. G157 is an NADP(+) binding site. Residues 206–351 enclose the KARI C-terminal knotted domain; it reads TFREETETDL…EPLRDLFAWS (146 aa). Mg(2+) contacts are provided by D214, E218, E250, and E254. S275 contributes to the substrate binding site. Positions 351–372 are disordered; that stretch reads SDNEETNDESDVVSEPEAAADD. Positions 352-372 are enriched in acidic residues; sequence DNEETNDESDVVSEPEAAADD.

Belongs to the ketol-acid reductoisomerase family. Mg(2+) is required as a cofactor.

It carries out the reaction (2R)-2,3-dihydroxy-3-methylbutanoate + NADP(+) = (2S)-2-acetolactate + NADPH + H(+). The enzyme catalyses (2R,3R)-2,3-dihydroxy-3-methylpentanoate + NADP(+) = (S)-2-ethyl-2-hydroxy-3-oxobutanoate + NADPH + H(+). It participates in amino-acid biosynthesis; L-isoleucine biosynthesis; L-isoleucine from 2-oxobutanoate: step 2/4. Its pathway is amino-acid biosynthesis; L-valine biosynthesis; L-valine from pyruvate: step 2/4. Involved in the biosynthesis of branched-chain amino acids (BCAA). Catalyzes an alkyl-migration followed by a ketol-acid reduction of (S)-2-acetolactate (S2AL) to yield (R)-2,3-dihydroxy-isovalerate. In the isomerase reaction, S2AL is rearranged via a Mg-dependent methyl migration to produce 3-hydroxy-3-methyl-2-ketobutyrate (HMKB). In the reductase reaction, this 2-ketoacid undergoes a metal-dependent reduction by NADPH to yield (R)-2,3-dihydroxy-isovalerate. In Haloquadratum walsbyi (strain DSM 16790 / HBSQ001), this protein is Ketol-acid reductoisomerase (NADP(+)).